Here is a 452-residue protein sequence, read N- to C-terminus: GTPase Der (452 aa).

EngA-type G domains follow at residues lysine 9 to aspartate 170 and leucine 185 to asparagine 362. GTP contacts are provided by residues glycine 15–serine 22, aspartate 62–phenylalanine 66, asparagine 124–glutamate 127, glycine 191–serine 198, aspartate 238–leucine 242, and asparagine 303–aspartate 306. Residues lysine 363–lysine 448 enclose the KH-like domain.

This sequence belongs to the TRAFAC class TrmE-Era-EngA-EngB-Septin-like GTPase superfamily. EngA (Der) GTPase family. As to quaternary structure, associates with the 50S ribosomal subunit.

In terms of biological role, GTPase that plays an essential role in the late steps of ribosome biogenesis. This is GTPase Der from Rickettsia bellii (strain OSU 85-389).